A 474-amino-acid polypeptide reads, in one-letter code: Coronin-1C (474 aa).

WD repeat units lie at residues 78-118 (GHTG…LTLS), 128-168 (GHSK…ALIN), 172-202 (MHSD…RVID), 215-249 (AHEG…ALWN), and 263-303 (DTSN…PYVH). The stretch at 435 to 474 (VQNEAKLDEILKEIKSIKETICSQDERISKLEQQLAKMAA) forms a coiled coil. Lys-446 is subject to N6-acetyllysine.

The protein belongs to the WD repeat coronin family. In terms of assembly, homotrimer. Binds F-actin. Interacts with RCC2. Interacts preferentially with nucleotide-free and GDP-bound RAC1. Interacts with VIM (via head domain). Interacts with MICAL2; this interaction recruits MICAL2 to the actin filaments. As to expression, detected in skeletal muscle (at protein level). Detected in fibroblasts (at protein level). Ubiquitous.

It is found in the cell membrane. It localises to the cell projection. The protein resides in the lamellipodium. Its subcellular location is the ruffle membrane. The protein localises to the cytoplasm. It is found in the cytoskeleton. It localises to the cell cortex. The protein resides in the endosome membrane. In terms of biological role, plays a role in directed cell migration by regulating the activation and subcellular location of RAC1. Increases the presence of activated RAC1 at the leading edge of migrating cells. Required for normal organization of the cytoskeleton, including the actin cytoskeleton, microtubules and the vimentin intermediate filaments. Required for normal cell proliferation, cell migration, and normal formation of lamellipodia. Plays a role in endoplasmic reticulum-associated endosome fission: localizes to endosome membrane tubules and promotes recruitment of TMCC1, leading to recruitment of the endoplasmic reticulum to endosome tubules for fission. Endosome membrane fission of early and late endosomes is essential to separate regions destined for lysosomal degradation from carriers to be recycled to the plasma membrane. Required for normal distribution of mitochondria within cells. This chain is Coronin-1C (Coro1c), found in Mus musculus (Mouse).